Consider the following 330-residue polypeptide: MEEEDMFDLLKKFTGIVGVSGNEEEIREAIIEEIKECVDEIKVDTLGNLIAVKKGKGKKIMVAAHMDEIGVMVTYIDDKGFLRFSAVGGVSRYDCIGQRVKFKNGVVGAVYYEEKLEDMKNLQLSKMYIDIGARSREEALKMVNIGDVACFVGDAVLQGDTVISKALDNRSGCAVVVKAIKELKKTDNEIYFVFTVQEEVGLRGAKTAAFSIKPDIAIAVDVTMTGDTPESHPMEVKCGGGPAIKVKDRSVICHPEVRKLLEESAKRNNIPYQLEILEAGGSDPGSIHLTAGGIPSGAISIPVRYVHSPVETASMSDINNAVKLLVEAIC.

A divalent metal cation-binding residues include histidine 65 and aspartate 168. Residue glutamate 198 is the Proton acceptor of the active site. The a divalent metal cation site is built by glutamate 199, aspartate 221, and histidine 307.

This sequence belongs to the peptidase M42 family. The cofactor is a divalent metal cation.

The chain is Putative aminopeptidase (celM) from Acetivibrio thermocellus (Hungateiclostridium thermocellum).